The primary structure comprises 211 residues: Adenylate kinase (211 aa).

10 to 15 provides a ligand contact to ATP; the sequence is GSGKGT. An NMP region spans residues 30–59; that stretch reads STGDMLRAEVSKKSPLGLKAEEYMKQGLLV. Residues threonine 31, arginine 36, 57–59, 84–87, and glutamine 91 each bind AMP; these read LLV and GFPR. The tract at residues 125–162 is LID; sequence GRRVCPKCGATYNIYYQKPKNDTLCDNDATPLIQRDDD. Position 126 (arginine 126) interacts with ATP. 2 residues coordinate Zn(2+): cysteine 129 and cysteine 132. 135-136 is an ATP binding site; the sequence is TY. The Zn(2+) site is built by cysteine 149 and aspartate 152. 2 residues coordinate AMP: arginine 159 and arginine 170. Position 198 (glycine 198) interacts with ATP.

It belongs to the adenylate kinase family. In terms of assembly, monomer.

The protein resides in the cytoplasm. The catalysed reaction is AMP + ATP = 2 ADP. The protein operates within purine metabolism; AMP biosynthesis via salvage pathway; AMP from ADP: step 1/1. Its function is as follows. Catalyzes the reversible transfer of the terminal phosphate group between ATP and AMP. Plays an important role in cellular energy homeostasis and in adenine nucleotide metabolism. This chain is Adenylate kinase, found in Hydrogenobaculum sp. (strain Y04AAS1).